A 782-amino-acid chain; its full sequence is Coiled-coil alpha-helical rod protein 1 (782 aa).

Composition is skewed to basic and acidic residues over residues 62 to 74 (ERDV…EPGR) and 208 to 218 (ETRRAGEAKEL). Disordered stretches follow at residues 62 to 82 (ERDV…WGLE) and 182 to 218 (LTQA…AKEL). 3 coiled-coil regions span residues 82 to 314 (EGSQ…ELTR), 344 to 437 (LMVQ…NAVS), and 498 to 691 (VADV…QQEG).

The protein localises to the cytoplasm. It is found in the nucleus. Its function is as follows. May be a regulator of keratinocyte proliferation or differentiation. The protein is Coiled-coil alpha-helical rod protein 1 (CCHCR1) of Pan paniscus (Pygmy chimpanzee).